Here is a 469-residue protein sequence, read N- to C-terminus: Alpha,alpha-trehalose-phosphate synthase [UDP-forming] (469 aa).

D-glucose 6-phosphate-binding residues include Y87 and D141. Positions 279 and 284 each coordinate UDP. R279 and K284 together coordinate UDP-alpha-D-glucose. Position 317 (R317) interacts with D-glucose 6-phosphate. 378-386 (DGMNLVSYE) lines the UDP-alpha-D-glucose pocket. 382-386 (LVSYE) is a UDP binding site.

The protein belongs to the glycosyltransferase 20 family.

It catalyses the reaction D-glucose 6-phosphate + UDP-alpha-D-glucose = alpha,alpha-trehalose 6-phosphate + UDP + H(+). It functions in the pathway carbohydrate biosynthesis. Synthase catalytic subunit of the trehalose synthase complex that catalyzes the production of trehalose from glucose-6-phosphate and UDP-alpha-D-glucose in a two step process. The disaccharide trehalose serves as a storage carbohydrate that is mobilized during spore germination. The sequence is that of Alpha,alpha-trehalose-phosphate synthase [UDP-forming] from Yarrowia lipolytica (strain CLIB 122 / E 150) (Yeast).